A 107-amino-acid chain; its full sequence is Diuretic hormone 45 (107 aa).

Positions 1–44 (LYAMSPMAARYSAGAPWLYLLADMPRDSQRLVDPADLHEGRARP) are excised as a propeptide. The residue at position 91 (valine 91) is a Valine amide.

Expressed in corpora cardiaca (CC), corpora allata (CA), antennal lobe (AL) and gnathal ganglion (GNG) (at protein level). Expression in AL and GNG detected in some animals, in CC and CA in few animals (at protein level).

The protein resides in the secreted. Regulation of fluid secretion. The polypeptide is Diuretic hormone 45 (Agrotis ipsilon (Black cutworm moth)).